The primary structure comprises 243 residues: Outer membrane protein A (243 aa).

5 consecutive transmembrane segments (beta stranded) span residues 1 to 8 (LAAKLSYP), 13 to 21 (LDIYTRLGG), 48 to 57 (PLAAVGVEYA), 62 to 69 (WATRLDYQ), and 88 to 96 (MLSLGVSYR). 5 consecutive repeat copies span residues 104–105 (AP), 106–107 (AP), 108–109 (AP), 110–111 (AP), and 112–113 (AP). Residues 104–113 (APAPAPAPAP) form a 5 X 2 AA tandem repeats of A-P region. One can recognise an OmpA-like domain in the interval 115-243 (VETKLFTLKS…RRVEIEVKGI (129 aa)). A disulfide bridge links cysteine 215 with cysteine 229.

Belongs to the outer membrane OOP (TC 1.B.6) superfamily. OmpA family. As to quaternary structure, monomer and homodimer.

It localises to the cell outer membrane. In terms of biological role, with TolR probably plays a role in maintaining the position of the peptidoglycan cell wall in the periplasm. Acts as a porin with low permeability that allows slow penetration of small solutes; an internal gate slows down solute passage. The chain is Outer membrane protein A from Serratia odorifera.